A 339-amino-acid polypeptide reads, in one-letter code: Ketol-acid reductoisomerase (NADP(+)) (339 aa).

Residues 1–182 (MRVYYDRDAD…GGGRSGVIET (182 aa)) enclose the KARI N-terminal Rossmann domain. NADP(+) contacts are provided by residues 24–27 (YGSQ), Arg-48, Ser-51, Thr-53, and 83–86 (DELQ). His-108 is a catalytic residue. Residue Gly-134 coordinates NADP(+). The KARI C-terminal knotted domain maps to 183 to 328 (NFREECETDL…GRLRAMMPWI (146 aa)). Asp-191, Glu-195, Glu-227, and Glu-231 together coordinate Mg(2+). Ser-252 contributes to the substrate binding site.

This sequence belongs to the ketol-acid reductoisomerase family. The cofactor is Mg(2+).

The enzyme catalyses (2R)-2,3-dihydroxy-3-methylbutanoate + NADP(+) = (2S)-2-acetolactate + NADPH + H(+). The catalysed reaction is (2R,3R)-2,3-dihydroxy-3-methylpentanoate + NADP(+) = (S)-2-ethyl-2-hydroxy-3-oxobutanoate + NADPH + H(+). It participates in amino-acid biosynthesis; L-isoleucine biosynthesis; L-isoleucine from 2-oxobutanoate: step 2/4. It functions in the pathway amino-acid biosynthesis; L-valine biosynthesis; L-valine from pyruvate: step 2/4. In terms of biological role, involved in the biosynthesis of branched-chain amino acids (BCAA). Catalyzes an alkyl-migration followed by a ketol-acid reduction of (S)-2-acetolactate (S2AL) to yield (R)-2,3-dihydroxy-isovalerate. In the isomerase reaction, S2AL is rearranged via a Mg-dependent methyl migration to produce 3-hydroxy-3-methyl-2-ketobutyrate (HMKB). In the reductase reaction, this 2-ketoacid undergoes a metal-dependent reduction by NADPH to yield (R)-2,3-dihydroxy-isovalerate. The chain is Ketol-acid reductoisomerase (NADP(+)) from Phenylobacterium zucineum (strain HLK1).